The sequence spans 434 residues: Glycerol-3-phosphate acyltransferase 3 (434 aa).

A helical membrane pass occupies residues 14–34 (WLTLVLGFILLPSVFGVSLGI). Ser-68 and Ser-77 each carry phosphoserine. 2 helical membrane passes run 137 to 157 (ISLR…CVLL) and 161 to 181 (VTLA…VGQL). The HXXXXD motif signature appears at 229–234 (HTSPID).

Belongs to the 1-acyl-sn-glycerol-3-phosphate acyltransferase family. In terms of tissue distribution, widely expressed. Expressed in liver, kidney, testis, brain, heart, skeletal muscle, thyroid, prostate, thymus and placenta. Also expressed lung and adipose tissue.

It is found in the endoplasmic reticulum membrane. The catalysed reaction is sn-glycerol 3-phosphate + an acyl-CoA = a 1-acyl-sn-glycero-3-phosphate + CoA. It carries out the reaction a 1-acyl-sn-glycero-3-phosphate + an acyl-CoA = a 1,2-diacyl-sn-glycero-3-phosphate + CoA. It catalyses the reaction dodecanoyl-CoA + sn-glycerol 3-phosphate = 1-dodecanoyl-sn-glycerol 3-phosphate + CoA. The enzyme catalyses sn-glycerol 3-phosphate + hexadecanoyl-CoA = 1-hexadecanoyl-sn-glycero-3-phosphate + CoA. The catalysed reaction is sn-glycerol 3-phosphate + (9Z)-octadecenoyl-CoA = 1-(9Z-octadecenoyl)-sn-glycero-3-phosphate + CoA. It carries out the reaction (9Z,12Z)-octadecadienoyl-CoA + sn-glycerol 3-phosphate = 1-(9Z,12Z)-octadecadienoyl-sn-glycero-3-phosphate + CoA. It catalyses the reaction 1-tetradecanoyl-sn-glycerol 3-phosphate + (9Z)-octadecenoyl-CoA = 1-tetradecanoyl-2-(9Z)-octadecenoyl-sn-glycero-3-phosphate + CoA. The enzyme catalyses 1-hexadecanoyl-sn-glycero-3-phosphate + (9Z)-octadecenoyl-CoA = 1-hexadecanoyl-2-(9Z-octadecenoyl)-sn-glycero-3-phosphate + CoA. The catalysed reaction is 1-(9Z-octadecenoyl)-sn-glycero-3-phosphate + (9Z)-octadecenoyl-CoA = 1,2-di-(9Z-octadecenoyl)-sn-glycero-3-phosphate + CoA. It carries out the reaction 1-(6Z,9Z,12Z-octadecatrienoyl)-sn-glycero-3-phosphate + (9Z)-octadecenoyl-CoA = (6Z,9Z,12Z)-octadecatrienoyl-2-(9Z)-octadecenoyl-sn-glycero-3-phosphate + CoA. It catalyses the reaction 1-(9Z,12Z,15Z)-octadecatrienoyl-sn-glycero-3-phosphate + (9Z)-octadecenoyl-CoA = 1-(9Z,12Z,15Z)-octadecatrienoyl-2-(9Z)-octadecenoyl-sn-glycero-3-phosphate + CoA. The enzyme catalyses 1-(9Z-octadecenoyl)-sn-glycero-3-phosphate + tetradecanoyl-CoA = 1-(9Z)-octadecenoyl-2-tetradecanoyl-sn-glycero-3-phosphate + CoA. The catalysed reaction is 1-(9Z-octadecenoyl)-sn-glycero-3-phosphate + hexadecanoyl-CoA = 1-(9Z)-octadecenoyl-2-hexadecanoyl-sn-glycero-3-phosphate + CoA. It carries out the reaction 1-(9Z-octadecenoyl)-sn-glycero-3-phosphate + octadecanoyl-CoA = 1-(9Z-octadecenoyl)-2-octadecanoyl-sn-glycero-3-phosphate + CoA. It catalyses the reaction 1-(9Z-octadecenoyl)-sn-glycero-3-phosphate + (9Z,12Z)-octadecadienoyl-CoA = 1-(9Z)-octadecenoyl-2-(9Z,12Z)-octadecadienoyl-sn-glycero-3-phosphate + CoA. The enzyme catalyses 1-(5Z,8Z,11Z,14Z-eicosatetraenoyl)-sn-glycero-3-phosphate + (9Z)-octadecenoyl-CoA = 1-(5Z,8Z,11Z,14Z)-eicosatetraenoyl-2-(9Z)-octadecenoyl-sn-glycero-3-phosphate + CoA. It functions in the pathway glycerolipid metabolism; triacylglycerol biosynthesis. The protein operates within phospholipid metabolism; CDP-diacylglycerol biosynthesis; CDP-diacylglycerol from sn-glycerol 3-phosphate: step 1/3. With respect to regulation, inhibited by N-ethylmaleimide (NEM). Its function is as follows. Converts glycerol-3-phosphate to 1-acyl-sn-glycerol-3-phosphate (lysophosphatidic acid or LPA) by incorporating an acyl moiety at the sn-1 position of the glycerol backbone. Also converts LPA into 1,2-diacyl-sn-glycerol-3-phosphate (phosphatidic acid or PA) by incorporating an acyl moiety at the sn-2 position of the glycerol backbone. Protects cells against lipotoxicity. The protein is Glycerol-3-phosphate acyltransferase 3 of Homo sapiens (Human).